The primary structure comprises 224 residues: Ribose-5-phosphate isomerase A (224 aa).

Substrate is bound by residues Thr32–Thr35, Asp85–Asp88, and Lys98–Gly101. Glu107 (proton acceptor) is an active-site residue. Lys125 provides a ligand contact to substrate.

This sequence belongs to the ribose 5-phosphate isomerase family. As to quaternary structure, homodimer.

It carries out the reaction aldehydo-D-ribose 5-phosphate = D-ribulose 5-phosphate. It participates in carbohydrate degradation; pentose phosphate pathway; D-ribose 5-phosphate from D-ribulose 5-phosphate (non-oxidative stage): step 1/1. Functionally, catalyzes the reversible conversion of ribose-5-phosphate to ribulose 5-phosphate. The chain is Ribose-5-phosphate isomerase A from Pseudomonas putida (strain GB-1).